A 338-amino-acid polypeptide reads, in one-letter code: Limbic system-associated membrane protein (338 aa).

The signal sequence occupies residues 1 to 28; the sequence is MVARAQPDRKQLPLVLLRLLCLLPTGLP. Ig-like C2-type domains lie at 29–122, 132–214, and 219–306; these read VRSV…PKTS, PKIS…VRVT, and PTIT…LYLY. 4 N-linked (GlcNAc...) asparagine glycosylation sites follow: asparagine 40, asparagine 66, asparagine 136, and asparagine 148. The cysteines at positions 53 and 111 are disulfide-linked. Disulfide bonds link cysteine 153–cysteine 197 and cysteine 239–cysteine 290. Asparagine 279, asparagine 287, asparagine 300, and asparagine 315 each carry an N-linked (GlcNAc...) asparagine glycan. Asparagine 315 carries GPI-anchor amidated asparagine lipidation. A propeptide spans 316–338 (removed in mature form); it reads GSVSLAVPLWLLAASLLCLLSKC.

It belongs to the immunoglobulin superfamily. IgLON family.

The protein localises to the cell membrane. Mediates selective neuronal growth and axon targeting. Probably serves as a recognition molecule for the formation of limbic connections. In Gallus gallus (Chicken), this protein is Limbic system-associated membrane protein.